We begin with the raw amino-acid sequence, 709 residues long: Dibasic-processing endoprotease (709 aa).

A signal peptide spans Met1–Cys22. 2 propeptides span residues Ser23–Arg82 and Gly83–Arg102. Residues Asp103–Glu668 lie on the Lumenal side of the membrane. The region spanning Gln128–Val440 is the Peptidase S8 domain. N-linked (GlcNAc...) asparagine glycosylation is present at Asn155. Residues Asp162 and His200 each act as charge relay system in the active site. Cystine bridges form between Cys216–Cys363 and Cys308–Cys338. Residue Ser371 is the Charge relay system of the active site. Residues Val449–Asn588 form the P/Homo B domain. N-linked (GlcNAc...) asparagine glycosylation is found at Asn463, Asn471, and Asn620. Residues Ile669–Ala693 traverse the membrane as a helical segment. The Cytoplasmic portion of the chain corresponds to Phe694–Ala709.

It belongs to the peptidase S8 family. Furin subfamily. Ca(2+) is required as a cofactor. In terms of processing, N-glycosylated.

It localises to the golgi apparatus. The protein localises to the trans-Golgi network membrane. Membrane-bound, subtilisin-like serine protease that processes the P-factor precursor and other precursor proteins. Essential for cell viability. Cleaves substrate on the C-terminal side of dibasic residues. The polypeptide is Dibasic-processing endoprotease (krp1) (Schizosaccharomyces pombe (strain 972 / ATCC 24843) (Fission yeast)).